The chain runs to 216 residues: Putative holocytochrome-c1 synthase (216 aa).

Residues Met-1 to Pro-46 are disordered.

It belongs to the cytochrome c-type heme lyase family.

It localises to the mitochondrion inner membrane. It carries out the reaction holo-[cytochrome c] = apo-[cytochrome c] + heme b. In terms of biological role, lyase that catalyzes the covalent linking of the heme group to the cytochrome C1 apoprotein to produce the mature functional cytochrome. The chain is Putative holocytochrome-c1 synthase from Schizosaccharomyces pombe (strain 972 / ATCC 24843) (Fission yeast).